Reading from the N-terminus, the 494-residue chain is Ammonium transporter Rh type C (494 aa).

The Cytoplasmic portion of the chain corresponds to 1-22; the sequence is MGNFIQGCKDYFSQQKNTNIRL. Residues 23–43 form a helical membrane-spanning segment; the sequence is TLPVVCFVWQIAMIILFGVFI. Over 44-74 the chain is Extracellular; that stretch reads RYDEESDTHWVETKAHDNITSDIENDFYFRY. Asn-61 is a glycosylation site (N-linked (GlcNAc...) asparagine). A helical transmembrane segment spans residues 75 to 95; it reads PSFQDVHVMIFVGFGFLMTFL. The Cytoplasmic portion of the chain corresponds to 96-99; that stretch reads KRYS. The helical transmembrane segment at 100–120 threads the bilayer; it reads FGAVGFNFLIASFGLQWALLM. Residues 121–133 are Extracellular-facing; the sequence is QGWFHSLDPQTGK. A helical membrane pass occupies residues 134-154; that stretch reads IFIGVESLINADFCVAGCLIA. At 155 to 166 the chain is on the cytoplasmic side; the sequence is YGAVLGKVSPVQ. A helical transmembrane segment spans residues 167–187; the sequence is LLVMTLFGVTLFAVEEYIILN. Residues 188 to 194 lie on the Extracellular side of the membrane; sequence LLHARDA. A helical transmembrane segment spans residues 195 to 215; it reads GGSMVIHTFGGYYGLTISWVL. Over 216-234 the chain is Cytoplasmic; the sequence is YRPNLHQSKRMQGSVYHSD. The helical transmembrane segment at 235–255 threads the bilayer; the sequence is IFAMIGTLFLWMFWPSFNSAI. At 256-265 the chain is on the extracellular side; the sequence is TDHGDGQHRA. A helical membrane pass occupies residues 266-286; the sequence is VINTYLCLASTVLTTVAISSF. Topologically, residues 287-297 are cytoplasmic; that stretch reads SQKTGKLDMVH. A helical transmembrane segment spans residues 298 to 318; that stretch reads IQNSTLAGGVALGTAAEFMIS. Residue Pro-319 is a topological domain, extracellular. Residues 320–340 traverse the membrane as a helical segment; the sequence is YGALIVGFLCGIISTMGYIFI. Residues 341-358 are Cytoplasmic-facing; it reads SPFLEKTLKIQDTCGIHN. A helical membrane pass occupies residues 359–379; it reads LHAMPGVIGGIVGAITAAAAS. Over 380–411 the chain is Extracellular; it reads ESVYGKHALINTFDFTGDFKDRTVLTQGGYQA. A helical membrane pass occupies residues 412–432; sequence AGMCVSIVFGVAGGAIVGSIL. The Cytoplasmic segment spans residues 433–494; sequence KLPIWGDPAD…SNFSVEHCES (62 aa).

The protein belongs to the ammonium transporter (TC 2.A.49) family. Rh subfamily. In terms of assembly, homotrimer.

It is found in the apical cell membrane. In terms of biological role, functions as an ammonia transporter. May play a role in the elimination of ammonia in the gill. The protein is Ammonium transporter Rh type C (rhcg) of Oncorhynchus mykiss (Rainbow trout).